A 300-amino-acid chain; its full sequence is Ribosomal protein L11 methyltransferase (300 aa).

Residues Thr152, Gly173, Asp195, and Asn234 each contribute to the S-adenosyl-L-methionine site.

The protein belongs to the methyltransferase superfamily. PrmA family.

Its subcellular location is the cytoplasm. The enzyme catalyses L-lysyl-[protein] + 3 S-adenosyl-L-methionine = N(6),N(6),N(6)-trimethyl-L-lysyl-[protein] + 3 S-adenosyl-L-homocysteine + 3 H(+). Methylates ribosomal protein L11. The protein is Ribosomal protein L11 methyltransferase of Burkholderia lata (strain ATCC 17760 / DSM 23089 / LMG 22485 / NCIMB 9086 / R18194 / 383).